The primary structure comprises 410 residues: Probable peptidoglycan glycosyltransferase FtsW (410 aa).

Residues 1–37 lie on the Cytoplasmic side of the membrane; sequence MRSEERQLNLFGTSVNWSWPNLFKEREAPGMQLYDRA. Residues 38–58 traverse the membrane as a helical segment; sequence LLFAVLSLICFGFVMVMSASM. Residues 59–69 are Periplasmic-facing; that stretch reads PEAQSLTGNPY. The helical transmembrane segment at 70–90 threads the bilayer; the sequence is HFAIRHFAYLVGCAVIAAVVL. The Cytoplasmic segment spans residues 91-99; sequence RIEMSRWQQ. Residues 100–120 traverse the membrane as a helical segment; that stretch reads FSPLLLLIVGIMLVAVLLVGT. Residues 121–131 lie on the Periplasmic side of the membrane; sequence SVNGATRWLSV. Residues 132–154 form a helical membrane-spanning segment; that stretch reads GPIRIQVAELAKFAFTIYMAGYL. At 155–163 the chain is on the cytoplasmic side; the sequence is VRRHQEIRE. The helical transmembrane segment at 164-184 threads the bilayer; the sequence is NAKGFYKPIAVFAVYAFLILM. Residues 185–186 are Periplasmic-facing; that stretch reads QP. A helical membrane pass occupies residues 187-207; it reads DLGTVVVLFVGTVGLLFLAGA. Arginine 208 is a topological domain (cytoplasmic). Residues 209-229 form a helical membrane-spanning segment; it reads LLDFFALILTGVMAFVALVLL. Over 230 to 291 the chain is Periplasmic; the sequence is EPYRMRRVTS…PEAHTDFIFA (62 aa). A helical membrane pass occupies residues 292 to 312; sequence VIGEELGFIGIVVVLSVLLFV. At 313–336 the chain is on the cytoplasmic side; the sequence is ALRAIKLGNLCIEIDKPFEGYLAY. Residues 337-357 form a helical membrane-spanning segment; sequence AIGIWFCFQTVVNVGASIGML. The Periplasmic portion of the chain corresponds to 358 to 364; that stretch reads PTKGLTL. Residues 365 to 385 traverse the membrane as a helical segment; sequence PFISYGGSSLWVMTAAAMILI. Topologically, residues 386–410 are cytoplasmic; it reads RIDHERRLSSIQAVQGKKVNDNREY.

It belongs to the SEDS family. FtsW subfamily.

The protein resides in the cell inner membrane. It carries out the reaction [GlcNAc-(1-&gt;4)-Mur2Ac(oyl-L-Ala-gamma-D-Glu-L-Lys-D-Ala-D-Ala)](n)-di-trans,octa-cis-undecaprenyl diphosphate + beta-D-GlcNAc-(1-&gt;4)-Mur2Ac(oyl-L-Ala-gamma-D-Glu-L-Lys-D-Ala-D-Ala)-di-trans,octa-cis-undecaprenyl diphosphate = [GlcNAc-(1-&gt;4)-Mur2Ac(oyl-L-Ala-gamma-D-Glu-L-Lys-D-Ala-D-Ala)](n+1)-di-trans,octa-cis-undecaprenyl diphosphate + di-trans,octa-cis-undecaprenyl diphosphate + H(+). It functions in the pathway cell wall biogenesis; peptidoglycan biosynthesis. In terms of biological role, peptidoglycan polymerase that is essential for cell division. The chain is Probable peptidoglycan glycosyltransferase FtsW from Shewanella sediminis (strain HAW-EB3).